The chain runs to 418 residues: MFDINLIRKDIVVTKEKMLNKKVSSDLFDQIFGLDVLVRNLMQQEQNLNAKKNQLSKEIGILAKNKDPKLQQTLDLVNSIKSELQDISLTLSNKQDELNKLLLVIPNMPDDSVPIGNDENDNVEIKKVFEPRKFDFSPLAHWDLAAKNKLIDFDKSTKITGSRFIIYTNFGARLYRALQQFCLDMNVKAGFNEIWAPVIVNQESLIGSGNLPKFVDDLFKLENSNYYLSPTAEVQLTNLHRNEILKASDLPLYYTALTPCFRSEAGSAGRDVRGVIRQHQFHKVELVKLCKPEDSFKELESMTRQAESILEALELPYRRIALCTGDLGFSSAKTYDLEVWLPSYNAYKEISSCSNCTNFQARRAKIRYKETVDAPTELVHTLNGSSLAIDRLWAAVVENYQQEDGSITIPKALEKYIY.

231-233 is an L-serine binding site; sequence TAE. 262–264 is a binding site for ATP; the sequence is RSE. Glutamate 285 lines the L-serine pocket. An ATP-binding site is contributed by 349 to 352; sequence EISS. Serine 385 contacts L-serine.

This sequence belongs to the class-II aminoacyl-tRNA synthetase family. Type-1 seryl-tRNA synthetase subfamily. In terms of assembly, homodimer. The tRNA molecule binds across the dimer.

It is found in the cytoplasm. It carries out the reaction tRNA(Ser) + L-serine + ATP = L-seryl-tRNA(Ser) + AMP + diphosphate + H(+). The enzyme catalyses tRNA(Sec) + L-serine + ATP = L-seryl-tRNA(Sec) + AMP + diphosphate + H(+). The protein operates within aminoacyl-tRNA biosynthesis; selenocysteinyl-tRNA(Sec) biosynthesis; L-seryl-tRNA(Sec) from L-serine and tRNA(Sec): step 1/1. Functionally, catalyzes the attachment of serine to tRNA(Ser). Is also able to aminoacylate tRNA(Sec) with serine, to form the misacylated tRNA L-seryl-tRNA(Sec), which will be further converted into selenocysteinyl-tRNA(Sec). The chain is Serine--tRNA ligase from Ureaplasma urealyticum serovar 10 (strain ATCC 33699 / Western).